A 135-amino-acid chain; its full sequence is Retinol-binding protein 5 (135 aa).

Belongs to the calycin superfamily. Fatty-acid binding protein (FABP) family.

It localises to the cytoplasm. Its function is as follows. Intracellular transport of retinol. The chain is Retinol-binding protein 5 (RBP5) from Pongo abelii (Sumatran orangutan).